Consider the following 508-residue polypeptide: Phenylacetaldehyde synthase (508 aa).

L-phenylalanine is bound by residues histidine 203 and histidine 318. Position 319 is an N6-(pyridoxal phosphate)lysine (lysine 319). Phenylalanine 348 lines the L-phenylalanine pocket.

This sequence belongs to the group II decarboxylase family. Homotetramer. The cofactor is pyridoxal 5'-phosphate.

It catalyses the reaction L-phenylalanine + O2 + H2O + H(+) = 2-phenylacetaldehyde + H2O2 + NH4(+) + CO2. Its function is as follows. Bifunctional enzyme that catalyzes the decarboxylation of L-phenylalanine to produce 2-phenylethylamine, which is then oxidized to form 2-phenylacetaldehyde, a constituent of floral scent in petals. 2-phenylacetaldehyde is a precursor of 2-phenylethanol, another constituent of floral scent in petals. This is Phenylacetaldehyde synthase from Rosa hybrid cultivar.